A 439-amino-acid chain; its full sequence is GTPase Der (439 aa).

EngA-type G domains are found at residues 4 to 168 (PIVA…KDDE) and 177 to 352 (INIA…DNYT). Residues 10–17 (GRPNVGKS), 57–61 (DTGGI), 120–123 (NKID), 183–190 (GKPNVGKS), 230–234 (DTAGL), and 295–298 (NKWD) contribute to the GTP site. The 85-residue stretch at 353 to 437 (KRVKTGVLND…GIKTEFRERK (85 aa)) folds into the KH-like domain.

Belongs to the TRAFAC class TrmE-Era-EngA-EngB-Septin-like GTPase superfamily. EngA (Der) GTPase family. In terms of assembly, associates with the 50S ribosomal subunit.

GTPase that plays an essential role in the late steps of ribosome biogenesis. This Clostridium botulinum (strain Loch Maree / Type A3) protein is GTPase Der.